Here is a 307-residue protein sequence, read N- to C-terminus: Homoserine kinase (307 aa).

86-96 (PIARGLGSSAA) contacts ATP.

Belongs to the GHMP kinase family. Homoserine kinase subfamily.

It is found in the cytoplasm. It carries out the reaction L-homoserine + ATP = O-phospho-L-homoserine + ADP + H(+). The protein operates within amino-acid biosynthesis; L-threonine biosynthesis; L-threonine from L-aspartate: step 4/5. Its function is as follows. Catalyzes the ATP-dependent phosphorylation of L-homoserine to L-homoserine phosphate. This is Homoserine kinase from Petrotoga mobilis (strain DSM 10674 / SJ95).